The following is a 141-amino-acid chain: Vesicle-associated membrane protein 4 (141 aa).

The tract at residues methionine 1–aspartate 51 is disordered. At methionine 1–alanine 118 the chain is on the cytoplasmic side. Phosphoserine occurs at positions 17 and 30. The region spanning lysine 52–arginine 112 is the v-SNARE coiled-coil homology domain. Residues isoleucine 119–phenylalanine 139 form a helical; Anchor for type IV membrane protein membrane-spanning segment. Residues arginine 140–threonine 141 are Vesicular-facing.

Belongs to the synaptobrevin family. Identified in a complex containing STX6, STX12, VAMP4 and VTI1A. Interacts with BAIAP3; this interaction is increased in the presence of calcium. (Microbial infection) Targeted and hydrolyzed by C.botulinum neurotoxin type X (BoNT/X) which hydrolyzes the 87-Arg-|-Ser-88 bond and probably inhibits neurotransmitter release. It remains unknown whether BoNT/X is ever produced, or what organisms it targets.

The protein localises to the golgi apparatus. It localises to the trans-Golgi network membrane. Functionally, involved in the pathway that functions to remove an inhibitor (probably synaptotagmin-4) of calcium-triggered exocytosis during the maturation of secretory granules. May be a marker for this sorting pathway that is critical for remodeling the secretory response of granule. The protein is Vesicle-associated membrane protein 4 (Vamp4) of Mus musculus (Mouse).